The sequence spans 639 residues: Kinesin-like protein KIF22 (639 aa).

Positions 18-345 (RVRVAVRLRP…LNFAAKSKQI (328 aa)) constitute a Kinesin motor domain. 102–109 (GPTGAGKT) contacts ATP. Residues 358-400 (IAALPAMKRPREEAETAAGSRQRKKSKTDSTESSPNTSMDAAS) are disordered. Residues 388-397 (TESSPNTSMD) are compositionally biased toward polar residues. The stretch at 439–484 (KRERMALLKKWEESQMEIERLKEKQKELEQKAIEAEARLEKSTNSD) forms a coiled coil. Positions 549–552 (GREN) match the Important for regulated proteolytic degradation motif.

Belongs to the TRAFAC class myosin-kinesin ATPase superfamily. Kinesin family. In terms of processing, ubiquitinated, leading to its subsequent proteasomal degradation.

It localises to the nucleus. The protein localises to the cytoplasm. Its subcellular location is the cytoskeleton. In terms of biological role, kinesin family member that is involved in spindle formation and the movements of chromosomes during mitosis and meiosis. Binds to microtubules and to DNA. The chain is Kinesin-like protein KIF22 (kif22) from Xenopus tropicalis (Western clawed frog).